We begin with the raw amino-acid sequence, 447 residues long: ATP-dependent protease ATPase subunit HslU (447 aa).

Residues Ile-18, 60-65 (GVGKTE), Asp-259, Glu-325, and Arg-397 contribute to the ATP site.

The protein belongs to the ClpX chaperone family. HslU subfamily. As to quaternary structure, a double ring-shaped homohexamer of HslV is capped on each side by a ring-shaped HslU homohexamer. The assembly of the HslU/HslV complex is dependent on binding of ATP.

It is found in the cytoplasm. Functionally, ATPase subunit of a proteasome-like degradation complex; this subunit has chaperone activity. The binding of ATP and its subsequent hydrolysis by HslU are essential for unfolding of protein substrates subsequently hydrolyzed by HslV. HslU recognizes the N-terminal part of its protein substrates and unfolds these before they are guided to HslV for hydrolysis. In Burkholderia ambifaria (strain MC40-6), this protein is ATP-dependent protease ATPase subunit HslU.